A 739-amino-acid chain; its full sequence is Mitochondrial proton/calcium exchanger protein (739 aa).

The transit peptide at 1–115 (MASILLRSCR…RGWHSSRPVR (115 aa)) directs the protein to the mitochondrion. Residues 115–136 (RDDSVVEKSLKSLKDKNKKLEE) are a coiled coil. At 116-208 (DDSVVEKSLK…FLRICADLFR (93 aa)) the chain is on the mitochondrial intermembrane side. Phosphothreonine; by PINK1 is present on threonine 192. The helical transmembrane segment at 209-229 (LVPFLVFVVVPFMEFLLPVAV) threads the bilayer. At 230–739 (KLFPNMLPST…AEKEVAEVKS (510 aa)) the chain is on the mitochondrial matrix side. Residues 252-537 (KELRVKLELA…TAPVLEGLKE (286 aa)) enclose the Letm1 RBD domain. Coiled coils occupy residues 462 to 490 (NKAK…KRSE) and 537 to 627 (EEEI…SQLE). The residue at position 597 (lysine 597) is an N6-acetyllysine. Residues 663–698 (IPESKLTSLAAALDENKDGKVNIDDLVKVIELVDKE) enclose the EF-hand domain. Ca(2+) is bound by residues aspartate 676, asparagine 678, aspartate 680, lysine 682, and aspartate 687. The stretch at 708–739 (AEIVATLEKEEKVEEKEKAKEKAEKEVAEVKS) forms a coiled coil. Residues 718–739 (EKVEEKEKAKEKAEKEVAEVKS) are disordered.

This sequence belongs to the LETM1 family. In terms of assembly, homohexamer. Can form 2 complexes: a major (300 kDa) and a minor complex (500-600 kDa). Interacts with BCS1L. Interacts with GHITM. PINK1-mediated phosphorylation at Thr-192, positively regulates its mitochondrial calcium transport activity.

The protein localises to the mitochondrion inner membrane. It catalyses the reaction Ca(2+)(in) + 2 H(+)(out) = Ca(2+)(out) + 2 H(+)(in). The catalysed reaction is K(+)(in) + H(+)(out) = K(+)(out) + H(+)(in). Inhibited by ruthenium red or its derivative Ru360. Its function is as follows. Plays an important role in maintenance of mitochondrial morphology and in mediating either calcium or potassium/proton antiport. Mediates proton-dependent calcium efflux from mitochondrion. Also functions as an electroneutral mitochondrial proton/potassium exchanger. Crucial for the maintenance of mitochondrial tubular networks and for the assembly of the supercomplexes of the respiratory chain. Required for the maintenance of the tubular shape and cristae organization. The sequence is that of Mitochondrial proton/calcium exchanger protein from Homo sapiens (Human).